A 209-amino-acid chain; its full sequence is Molybdenum cofactor guanylyltransferase (209 aa).

Residues 13-15 (LAG), lysine 26, asparagine 54, aspartate 72, and aspartate 107 each bind GTP. Position 107 (aspartate 107) interacts with Mg(2+).

Belongs to the MobA family. Monomer. Mg(2+) is required as a cofactor.

The protein localises to the cytoplasm. The catalysed reaction is Mo-molybdopterin + GTP + H(+) = Mo-molybdopterin guanine dinucleotide + diphosphate. Transfers a GMP moiety from GTP to Mo-molybdopterin (Mo-MPT) cofactor (Moco or molybdenum cofactor) to form Mo-molybdopterin guanine dinucleotide (Mo-MGD) cofactor. This is Molybdenum cofactor guanylyltransferase from Nitrobacter hamburgensis (strain DSM 10229 / NCIMB 13809 / X14).